We begin with the raw amino-acid sequence, 232 residues long: Endonuclease V (232 aa).

2 residues coordinate Mg(2+): aspartate 43 and aspartate 109.

It belongs to the endonuclease V family. Mg(2+) serves as cofactor.

The protein localises to the cytoplasm. The catalysed reaction is Endonucleolytic cleavage at apurinic or apyrimidinic sites to products with a 5'-phosphate.. Its function is as follows. DNA repair enzyme involved in the repair of deaminated bases. Selectively cleaves double-stranded DNA at the second phosphodiester bond 3' to a deoxyinosine leaving behind the intact lesion on the nicked DNA. The chain is Endonuclease V from Thermofilum pendens (strain DSM 2475 / Hrk 5).